Reading from the N-terminus, the 512-residue chain is Photosystem II CP47 reaction center protein (512 aa).

A run of 6 helical transmembrane segments spans residues 21-36 (AVHL…WAGS), 101-115 (IVLS…IWHW), 140-156 (GIHL…FGAF), 203-218 (IAAG…FHLS), 237-252 (VLSS…AFVV), and 457-472 (TFAL…HGAR).

The protein belongs to the PsbB/PsbC family. PsbB subfamily. In terms of assembly, PSII is composed of 1 copy each of membrane proteins PsbA, PsbB, PsbC, PsbD, PsbE, PsbF, PsbH, PsbI, PsbJ, PsbK, PsbL, PsbM, PsbT, PsbX, PsbY, PsbZ, Psb30/Ycf12, at least 3 peripheral proteins of the oxygen-evolving complex and a large number of cofactors. It forms dimeric complexes. Binds multiple chlorophylls. PSII binds additional chlorophylls, carotenoids and specific lipids. is required as a cofactor.

The protein localises to the plastid. It is found in the chloroplast thylakoid membrane. One of the components of the core complex of photosystem II (PSII). It binds chlorophyll and helps catalyze the primary light-induced photochemical processes of PSII. PSII is a light-driven water:plastoquinone oxidoreductase, using light energy to abstract electrons from H(2)O, generating O(2) and a proton gradient subsequently used for ATP formation. This is Photosystem II CP47 reaction center protein from Physcomitrium patens (Spreading-leaved earth moss).